Here is a 235-residue protein sequence, read N- to C-terminus: MLDLFGASSAPTFGNQGKFTTDPVTGALIPVVVEQSSRGERSFDIYSRLLRERIIFVTGEVEDHMASVIIAQLLFLESENPSKDISMYINSPGGVVTAGLAIYDTMQYIRPRVSTVCIGQAASMGSFLLAAGEPGMRIALPNARIMIHQPSGGARGMASDIEIQAREILRIRKRMNDLYVKFTGRSLDEIEKAMDRDTFLEAEEAMKFGLVDKVFESRPATDSVGEGEGSGGAPA.

S123 acts as the Nucleophile in catalysis. The active site involves H148.

This sequence belongs to the peptidase S14 family. As to quaternary structure, fourteen ClpP subunits assemble into 2 heptameric rings which stack back to back to give a disk-like structure with a central cavity, resembling the structure of eukaryotic proteasomes.

It is found in the cytoplasm. The enzyme catalyses Hydrolysis of proteins to small peptides in the presence of ATP and magnesium. alpha-casein is the usual test substrate. In the absence of ATP, only oligopeptides shorter than five residues are hydrolyzed (such as succinyl-Leu-Tyr-|-NHMec, and Leu-Tyr-Leu-|-Tyr-Trp, in which cleavage of the -Tyr-|-Leu- and -Tyr-|-Trp bonds also occurs).. Cleaves peptides in various proteins in a process that requires ATP hydrolysis. Has a chymotrypsin-like activity. Plays a major role in the degradation of misfolded proteins. This Novosphingobium aromaticivorans (strain ATCC 700278 / DSM 12444 / CCUG 56034 / CIP 105152 / NBRC 16084 / F199) protein is ATP-dependent Clp protease proteolytic subunit.